A 226-amino-acid polypeptide reads, in one-letter code: UPF0173 metal-dependent hydrolase SRU_1937 (226 aa).

Belongs to the UPF0173 family.

The protein is UPF0173 metal-dependent hydrolase SRU_1937 of Salinibacter ruber (strain DSM 13855 / M31).